The sequence spans 230 residues: RING finger protein 141 (230 aa).

Gly-2 carries the N-myristoyl glycine lipid modification. Residues 155–192 (CCICMDGRADLILPCAHSFCQKCIDKWSDRHRNCPICR) form an RING-type zinc finger.

It localises to the membrane. In terms of biological role, may be involved in spermatogenesis. This chain is RING finger protein 141 (RNF141), found in Bos taurus (Bovine).